The chain runs to 139 residues: Aspartate 1-decarboxylase (139 aa).

S26 serves as the catalytic Schiff-base intermediate with substrate; via pyruvic acid. S26 is subject to Pyruvic acid (Ser). T58 provides a ligand contact to substrate. Y59 (proton donor) is an active-site residue. A substrate-binding site is contributed by 72 to 74 (GGA).

This sequence belongs to the PanD family. Heterooctamer of four alpha and four beta subunits. Requires pyruvate as cofactor. Post-translationally, is synthesized initially as an inactive proenzyme, which is activated by self-cleavage at a specific serine bond to produce a beta-subunit with a hydroxyl group at its C-terminus and an alpha-subunit with a pyruvoyl group at its N-terminus.

The protein localises to the cytoplasm. The enzyme catalyses L-aspartate + H(+) = beta-alanine + CO2. It participates in cofactor biosynthesis; (R)-pantothenate biosynthesis; beta-alanine from L-aspartate: step 1/1. Functionally, catalyzes the pyruvoyl-dependent decarboxylation of aspartate to produce beta-alanine. This chain is Aspartate 1-decarboxylase, found in Microcystis aeruginosa (strain NIES-843 / IAM M-2473).